The chain runs to 467 residues: Mitochondrial distribution and morphology protein 10 (467 aa).

Residues Gly-361 to Ser-393 form a disordered region. Basic and acidic residues predominate over residues Arg-369–His-385.

Belongs to the MDM10 family. In terms of assembly, component of the ER-mitochondria encounter structure (ERMES) or MDM complex, composed of MMM1, MDM10, MDM12 and MDM34. Associates with the mitochondrial outer membrane sorting assembly machinery SAM(core) complex.

Its subcellular location is the mitochondrion outer membrane. Functionally, component of the ERMES/MDM complex, which serves as a molecular tether to connect the endoplasmic reticulum and mitochondria. Components of this complex are involved in the control of mitochondrial shape and protein biogenesis and may function in phospholipid exchange. MDM10 is involved in the late assembly steps of the general translocase of the mitochondrial outer membrane (TOM complex). Functions in the TOM40-specific route of the assembly of outer membrane beta-barrel proteins, including the association of TOM40 with the receptor TOM22 and small TOM proteins. Can associate with the SAM(core) complex as well as the MDM12-MMM1 complex, both involved in late steps of the major beta-barrel assembly pathway, that is responsible for biogenesis of all outer membrane beta-barrel proteins. May act as a switch that shuttles between both complexes and channels precursor proteins into the TOM40-specific pathway. Plays a role in mitochondrial morphology and in the inheritance of mitochondria. This Ajellomyces capsulatus (strain NAm1 / WU24) (Darling's disease fungus) protein is Mitochondrial distribution and morphology protein 10.